The sequence spans 308 residues: HTH-type transcriptional activator AllS (308 aa).

The HTH lysR-type domain occupies 2–59 (FDPETLRTFIAVAETGSFSKAAERLCKTTATISYRIKLLEENTGVALFFRTTRSVTLT). Residues 19 to 38 (FSKAAERLCKTTATISYRIK) constitute a DNA-binding region (H-T-H motif).

The protein belongs to the LysR transcriptional regulatory family.

In terms of biological role, positive regulator essential for the expression of allD operon. Binds to the allD promoter. The polypeptide is HTH-type transcriptional activator AllS (allS) (Escherichia coli O1:K1 / APEC).